We begin with the raw amino-acid sequence, 303 residues long: Probable serine/threonine-protein kinase FPV212 (303 aa).

Residues 25 to 303 (WILGKQLGSG…NYESLKQMFL (279 aa)) enclose the Protein kinase domain. ATP is bound by residues 31 to 39 (LGSGGFGLV) and Lys-54. Residue Asp-160 is the Proton acceptor of the active site.

The protein belongs to the protein kinase superfamily. Ser/Thr protein kinase family. Poxviruses subfamily.

It catalyses the reaction L-seryl-[protein] + ATP = O-phospho-L-seryl-[protein] + ADP + H(+). The catalysed reaction is L-threonyl-[protein] + ATP = O-phospho-L-threonyl-[protein] + ADP + H(+). This Vertebrata (FPV) protein is Probable serine/threonine-protein kinase FPV212.